Here is a 720-residue protein sequence, read N- to C-terminus: Connector enhancer of kinase suppressor of ras 1 (720 aa).

The SAM domain maps to 7-70 (WTPGKVATWL…LGGVEQLQAL (64 aa)). Positions 78–164 (NLQSLTEGLL…QVLHEDGPAA (87 aa)) constitute a CRIC domain. One can recognise a PDZ domain in the interval 196 to 285 (KAVLEQVQLD…GLSLVLKKIP (90 aa)). The interval 285-390 (PIPETPPQTP…RKKSKGLATR (106 aa)) is disordered. Positions 304-317 (RSPSLSLAPLSPRA) are enriched in low complexity. A phosphoserine mark is found at serine 307 and serine 314. Positions 348 to 359 (EPLPIPPEPPAI) are enriched in pro residues. Residues 379-390 (VGRKKSKGLATR) show a composition bias toward basic residues. One can recognise a PH domain in the interval 403-502 (RPDCDGWLLL…WVRHLITCIS (100 aa)). The tract at residues 504 to 573 (YQSPGRAPPP…TSFGSLTDSS (70 aa)) is disordered. The span at 518–530 (CYSETEAEDPDDE) shows a compositional bias: acidic residues. A compositionally biased stretch (low complexity) spans 533 to 546 (SHSASPSPAQAGSP). Polar residues predominate over residues 553-571 (PAATPTQRSPRTSFGSLTD). Positions 615 to 646 (QLNERVHRVRALQSTLKAKLQELQVLEEVLGD) form a coiled coil. Residues 676-720 (QAEGSSHILTSDSTEQSPHSLPSDPEEHSHLCPLTSESSLRPPDL) are disordered. Positions 678–695 (EGSSHILTSDSTEQSPHS) are enriched in polar residues.

Belongs to the CNKSR family. As to quaternary structure, interacts with RHO and RALGDS. In terms of processing, phosphorylated on tyrosine.

The protein localises to the cytoplasm. Its subcellular location is the membrane. In terms of biological role, may function as an adapter protein or regulator of Ras signaling pathways. This chain is Connector enhancer of kinase suppressor of ras 1 (CNKSR1), found in Homo sapiens (Human).